Consider the following 2636-residue polypeptide: Ankyrin repeat and KH domain-containing protein CBG24701 (2636 aa).

11 ANK repeats span residues 252 to 281 (SRITPLMEAAASSSEMIVELLLDYGMDPNA), 286 to 317 (NCNTALIYAAATDDRDMVEVILEHEGPHKVDV), 361 to 390 (NDNSPLIFAAMKGFLDIATVILDYQDKNQQ), 435 to 464 (NLPSPMMLACAGGFPELVEILLAAGARIDE), 468 to 500 (HKNTCLIEACDGVSGDQVSVVRMLLNRHADVNA), 505 to 534 (SGDTPMSLAARHGNIAIMKMLYEKGADLTT), 536 to 564 (KITPIVEASIETHLECVQFILAHCKTIPQ), 566 to 595 (QLSRALFAAAEGGCLKIVEELVRAGADLNF), 598 to 627 (DERTAIMKAARFNHFDIVQYLVYKGASVNF), 632 to 661 (NDATALSLACTYGNMDIAQFLIRNGADPML), and 665 to 695 (DGVNCFMEAAKHGSFDLMKLLVEFTKGNMDL). Disordered regions lie at residues 994–1030 (PIDAHQSNPPPAQQTGPKTTSLTTPQPDESNGATTIE), 1172–1191 (KSNRDKGSQQLKAAEQKKGK), and 1230–1268 (NNTQVQQQQGQQQQGQLRRTHSEGDGTERAKARSNVIDK). The segment covering 1006-1030 (QQTGPKTTSLTTPQPDESNGATTIE) has biased composition (polar residues). Residues 1233–1245 (QVQQQQGQQQQGQ) show a composition bias toward low complexity. Residues 1249–1260 (THSEGDGTERAK) are compositionally biased toward basic and acidic residues. 10 ANK repeats span residues 1273–1302 (TLETPLSIACSNGHREVVELLLKEGANIEH), 1306–1335 (KGFTPLIIAATYGHAPIVEVLLKNHAAIEA), 1340–1369 (TKDTALSLACTAGRKDVVEMLLAHGANKEH), 1373–1402 (SDYTPLSLASSSGFLDIVNLLLTAGSEINS), 1408–1437 (LGISPLMLAAMNGHKETTKVLLEKGSDINA), 1447–1476 (YRNTALTLASFQGRFEVVKLLLCYNANVEH), 1480–1509 (TGLTPLMECASGGYVDVGNLLIENGADPNA), 1515–1546 (TKDTALTIAAEKGHEKFVQMLLDNDVIYDIRN), 1548–1577 (KGCSALWLACNGGHLGTAQALVFKGADTDM), and 1581–1610 (RKMSPMVAAFRKGHIEIIKFLVGHAKQFPN). Positions 1638-1696 (RNAKKAQAETAEETANRLLQLIDDEKERDINKKQKIKDKKKQKKEAKKKFQAEQEQLSA) form a coiled coil. The disordered stretch occupies residues 1669-1857 (KKQKIKDKKK…SSISERQHSW (189 aa)). The segment covering 1670 to 1686 (KQKIKDKKKQKKEAKKK) has biased composition (basic residues). A compositionally biased stretch (pro residues) spans 1698–1708 (PSKPEPVVAPE). The span at 1709–1722 (PEPEPETEPVEEPA) shows a compositional bias: acidic residues. Residues 1811–1829 (DWQKAGKEGKKVRPKREGR) are compositionally biased toward basic and acidic residues. Over residues 1832–1851 (APSSAGSSQAKHRSNTSSIS) the composition is skewed to polar residues. In terms of domain architecture, KH spans 1864 to 1929 (VKAYEFTVPG…DVVSMAVNII (66 aa)). Disordered regions lie at residues 1980–2182 (SASI…SLPS), 2196–2221 (FKPTAPAPAPVTSIAPSTSTATSTAS), 2269–2292 (NSTASSLNTATTKNDTSDWGSNDF), 2301–2320 (SNQKTSSAPQQPVSSVNSQL), 2352–2417 (SQSS…TQQQ), 2444–2465 (MHRQENSSSVPGPSQPSANPYY), and 2539–2636 (GMMQ…SSRM). Polar residues predominate over residues 1994-2008 (SQCNRSSKSHGNQAT). A compositionally biased stretch (low complexity) spans 2025–2045 (TPPTQTQTKQQPTPSPQVQQP). Residues 2057 to 2083 (SLAQSSVPQATENVTKPTQTPPASVQQ) show a composition bias toward polar residues. Composition is skewed to low complexity over residues 2099 to 2119 (QVVQPVPPVHQHTPVPQQRPQ) and 2139 to 2148 (QQHMQQIQQQ). A compositionally biased stretch (pro residues) spans 2167–2179 (PGPPVQPQTPPQS). Residues 2269 to 2280 (NSTASSLNTATT) show a composition bias toward low complexity. Over residues 2281 to 2292 (KNDTSDWGSNDF) the composition is skewed to polar residues. Low complexity-rich tracts occupy residues 2361–2373 (QHQQQQQRIMQDP) and 2391–2417 (PQQFQQPQFSSQSHPSQSSMMPSTQQQ). Polar residues-rich tracts occupy residues 2449-2465 (NSSSVPGPSQPSANPYY), 2565-2574 (RSASGSSQNR), and 2583-2595 (QQPQPFSQLTQAD). Over residues 2599–2615 (RLLLQQQQQQRSSQQQQ) the composition is skewed to low complexity. Over residues 2616–2636 (NPTNQGLPQKWSNTWNSSSRM) the composition is skewed to polar residues.

Belongs to the mask family.

It is found in the cytoplasm. The polypeptide is Ankyrin repeat and KH domain-containing protein CBG24701 (Caenorhabditis briggsae).